A 444-amino-acid chain; its full sequence is Acyl-CoA 6-desaturase (444 aa).

At 1–131 (MGKGGNQGEG…DMNLFKTNHV (131 aa)) the chain is on the cytoplasmic side. The region spanning 18–95 (MPTFSWEEIQ…LKPLLIGELA (78 aa)) is the Cytochrome b5 heme-binding domain. A helical transmembrane segment spans residues 132-152 (FFLLLLAHIIALESIAWFTVF). The Lumenal portion of the chain corresponds to 153–157 (YFGNG). Residues 158 to 178 (WIPTLITAFVLATSQAQAGWL) traverse the membrane as a helical segment. At 179-264 (QHDYGHLSVY…KYLPYNHQHE (86 aa)) the chain is on the cytoplasmic side. Residues 180–184 (HDYGH) carry the Histidine box-1 motif. The Histidine box-2 motif lies at 217–221 (HFQHH). A helical transmembrane segment spans residues 265 to 285 (YFFLIGPPLLIPMYFQYQIIM). At 286-305 (TMIVHKNWVDLAWAISYYIR) the chain is on the lumenal side. A helical membrane pass occupies residues 306–326 (FFVTYIPFYGILGALLFLNFI). The Cytoplasmic portion of the chain corresponds to 327–444 (RFLESHWFVW…KLWLDAYLHK (118 aa)). Positions 382-386 (QIEHH) match the Histidine box-3 motif.

Belongs to the fatty acid desaturase type 1 family.

The protein resides in the endoplasmic reticulum membrane. The catalysed reaction is (9Z,12Z)-octadecadienoyl-CoA + 2 Fe(II)-[cytochrome b5] + O2 + 2 H(+) = (6Z,9Z,12Z)-octadecatrienoyl-CoA + 2 Fe(III)-[cytochrome b5] + 2 H2O. It carries out the reaction (9Z,12Z,15Z)-octadecatrienoyl-CoA + 2 Fe(II)-[cytochrome b5] + O2 + 2 H(+) = (6Z,9Z,12Z,15Z)-octadecatetraenoyl-CoA + 2 Fe(III)-[cytochrome b5] + 2 H2O. The enzyme catalyses (9Z,12Z,15Z,18Z,21Z)-tetracosapentaenoyl-CoA + 2 Fe(II)-[cytochrome b5] + O2 + 2 H(+) = (6Z,9Z,12Z,15Z,18Z,21Z)-tetracosahexaenoyl-CoA + 2 Fe(III)-[cytochrome b5] + 2 H2O. It catalyses the reaction (11E)-octadecenoyl-CoA + 2 Fe(II)-[cytochrome b5] + O2 + 2 H(+) = (6Z,11E)-octadecadienoyl-CoA + 2 Fe(III)-[cytochrome b5] + 2 H2O. The catalysed reaction is (11Z,14Z)-eicosadienoyl-CoA + 2 Fe(II)-[cytochrome b5] + O2 + 2 H(+) = (8Z,11Z,14Z)-eicosatrienoyl-CoA + 2 Fe(III)-[cytochrome b5] + 2 H2O. It carries out the reaction (11Z,14Z,17Z)-eicosatrienoyl-CoA + 2 Fe(II)-[cytochrome b5] + O2 + 2 H(+) = (8Z,11Z,14Z,17Z)-eicosatetraenoyl-CoA + 2 Fe(III)-[cytochrome b5] + 2 H2O. It participates in lipid metabolism; polyunsaturated fatty acid biosynthesis. In terms of biological role, involved in the biosynthesis of highly unsaturated fatty acids (HUFA) from the essential polyunsaturated fatty acids (PUFA) linoleic acid (LA) (18:2n-6) and alpha-linolenic acid (ALA) (18:3n-3) precursors, acting as a fatty acyl-coenzyme A (CoA) desaturase that introduces a cis double bond at carbon 6 of the fatty acyl chain. Catalyzes the first and rate limiting step in this pathway which is the desaturation of LA (18:2n-6) and ALA (18:3n-3) into gamma-linoleate (GLA) (18:3n-6) and stearidonate (18:4n-3), respectively. Subsequently, in the biosynthetic pathway of HUFA n-3 series, it desaturates tetracosapentaenoate (24:5n-3) to tetracosahexaenoate (24:6n-3), which is then converted to docosahexaenoate (DHA)(22:6n-3), an important lipid for nervous system function. It can also desaturate (11E)-octadecenoate (trans-vaccenoate) at carbon 6 generating (6Z,11E)-octadecadienoate. In addition to Delta-6 activity, this enzyme exhibits Delta-8 activity with slight biases toward n-3 fatty acyl-CoA substrates. The polypeptide is Acyl-CoA 6-desaturase (FADS2) (Macaca fascicularis (Crab-eating macaque)).